Consider the following 89-residue polypeptide: Large ribosomal subunit protein bL27 (89 aa).

The tract at residues 1-20 (MAHKKAGGSSRNGRDSESKR) is disordered.

Belongs to the bacterial ribosomal protein bL27 family.

The protein is Large ribosomal subunit protein bL27 of Bartonella bacilliformis (strain ATCC 35685 / KC583 / Herrer 020/F12,63).